A 139-amino-acid polypeptide reads, in one-letter code: Nucleoside diphosphate kinase (139 aa).

ATP-binding residues include lysine 10, phenylalanine 58, arginine 86, threonine 92, arginine 104, and asparagine 114. Histidine 117 acts as the Pros-phosphohistidine intermediate in catalysis.

This sequence belongs to the NDK family. In terms of assembly, homotetramer. Mg(2+) is required as a cofactor.

Its subcellular location is the cytoplasm. It catalyses the reaction a 2'-deoxyribonucleoside 5'-diphosphate + ATP = a 2'-deoxyribonucleoside 5'-triphosphate + ADP. The enzyme catalyses a ribonucleoside 5'-diphosphate + ATP = a ribonucleoside 5'-triphosphate + ADP. Functionally, major role in the synthesis of nucleoside triphosphates other than ATP. The ATP gamma phosphate is transferred to the NDP beta phosphate via a ping-pong mechanism, using a phosphorylated active-site intermediate. The polypeptide is Nucleoside diphosphate kinase (Nocardia farcinica (strain IFM 10152)).